The primary structure comprises 551 residues: MVDRKEIPLAMGLLAVLLFFVASSSSFHLVRASDEVDDAIFYESFDEDFDNRWIVSGKEEYNGVWKHSKSEGHDDFGLLVSEPARKYAIVKELDAPVSLKDGTVVLQFETRLQNGLECGGAYIKYLQTQESGWKPKGFDNESGYSIMFGPDRCGATNKVHFIFRHKNPKTGKHVEHHLKFPPSVPSDKLSHVYTAVLKDDNEVSILIDGEEKKKANFLSSEDFEPALIPSKTIPDPDDKKPEDWDERAKIPDPEAVKPEDWDEDAPREIIDEEAEKPEPWLDHEPEVDDPEAKPEDWDDEEDGEWEAPKIENPKCEAAPGCGEWKRPTKSNPAYKGKWSAPYIDNPNYKGIWKPQEIPNPEYFELEKPDFEPIAAIGIEIWTMQDGILFDNVLIAKDDKIAESYRETTWKPKFNIEKEKQKHEEEAAAAAAARSESEGIAGIQKKAFDLLYKIADIAFLSGQKEKIIEIIEKGEKQPNLTIGIIVSVVIVFVSIFFRLIFGGKKPANVEANVEKKKTNTETTSKQDGGEKEDNKEKEETANPPRRRPKRDN.

The N-terminal stretch at 1 to 26 (MVDRKEIPLAMGLLAVLLFFVASSSS) is a signal peptide. The Lumenal portion of the chain corresponds to 27–480 (FHLVRASDEV…EKGEKQPNLT (454 aa)). Ca(2+) is bound by residues serine 44 and aspartate 75. An intrachain disulfide couples cysteine 118 to cysteine 153. Residues tyrosine 122 and lysine 124 each coordinate an alpha-D-glucoside. Residue asparagine 140 is glycosylated (N-linked (GlcNAc...) asparagine). An alpha-D-glucoside-binding residues include tyrosine 144 and aspartate 151. The disordered stretch occupies residues 226-330 (ALIPSKTIPD…CGEWKRPTKS (105 aa)). The interval 233-364 (IPDPDDKKPE…QEIPNPEYFE (132 aa)) is p domain (Extended arm). 2 stretches are compositionally biased toward basic and acidic residues: residues 234-269 (PDPD…PREI) and 276-295 (KPEP…AKPE). 5 tandem repeats follow at residues 235–246 (DPDDKKPEDWDE), 252–263 (DPEAVKPEDWDE), 271–282 (DEEAEKPEPWLD), 289–299 (DPEAKPEDWDD), and 303–313 (GEWEAPKIENP). 4 X approximate repeats stretches follow at residues 235–299 (DPDD…DWDD) and 303–360 (GEWE…IPNP). The segment covering 296-305 (DWDDEEDGEW) has biased composition (acidic residues). The cysteines at positions 315 and 321 are disulfide-linked. Tandem repeats lie at residues 322–332 (GEWKRPTKSNP), 336–346 (GKWSAPYIDNP), and 350–360 (GIWKPQEIPNP). Glutamate 379 serves as a coordination point for an alpha-D-glucoside. Residue aspartate 390 participates in Ca(2+) binding. Asparagine 478 carries N-linked (GlcNAc...) asparagine glycosylation. The chain crosses the membrane as a helical span at residues 481–501 (IGIIVSVVIVFVSIFFRLIFG). The Cytoplasmic portion of the chain corresponds to 502–551 (GKKPANVEANVEKKKTNTETTSKQDGGEKEDNKEKEETANPPRRRPKRDN). The disordered stretch occupies residues 510 to 551 (ANVEKKKTNTETTSKQDGGEKEDNKEKEETANPPRRRPKRDN). The segment covering 526 to 539 (DGGEKEDNKEKEET) has biased composition (basic and acidic residues).

The protein belongs to the calreticulin family. In terms of tissue distribution, in vegetative and flowering tissues.

Its subcellular location is the endoplasmic reticulum membrane. Its function is as follows. Calcium-binding protein that interacts with newly synthesized monoglucosylated glycoproteins in the endoplasmic reticulum. It may act in assisting protein assembly and/or in the retention within the ER of unassembled protein subunits. It seems to play a major role in the quality control apparatus of the ER by the retention of incorrectly folded proteins. This chain is Calnexin homolog, found in Pisum sativum (Garden pea).